The following is a 286-amino-acid chain: Phosphatidylserine decarboxylase proenzyme (286 aa).

Residues Asp88, His145, and Ser251 each act as charge relay system; for autoendoproteolytic cleavage activity in the active site. Catalysis depends on Ser251, which acts as the Schiff-base intermediate with substrate; via pyruvic acid; for decarboxylase activity. Position 251 is a pyruvic acid (Ser); by autocatalysis (Ser251).

It belongs to the phosphatidylserine decarboxylase family. PSD-B subfamily. Prokaryotic type I sub-subfamily. Heterodimer of a large membrane-associated beta subunit and a small pyruvoyl-containing alpha subunit. Pyruvate serves as cofactor. Post-translationally, is synthesized initially as an inactive proenzyme. Formation of the active enzyme involves a self-maturation process in which the active site pyruvoyl group is generated from an internal serine residue via an autocatalytic post-translational modification. Two non-identical subunits are generated from the proenzyme in this reaction, and the pyruvate is formed at the N-terminus of the alpha chain, which is derived from the carboxyl end of the proenzyme. The autoendoproteolytic cleavage occurs by a canonical serine protease mechanism, in which the side chain hydroxyl group of the serine supplies its oxygen atom to form the C-terminus of the beta chain, while the remainder of the serine residue undergoes an oxidative deamination to produce ammonia and the pyruvoyl prosthetic group on the alpha chain. During this reaction, the Ser that is part of the protease active site of the proenzyme becomes the pyruvoyl prosthetic group, which constitutes an essential element of the active site of the mature decarboxylase.

The protein localises to the cell membrane. It catalyses the reaction a 1,2-diacyl-sn-glycero-3-phospho-L-serine + H(+) = a 1,2-diacyl-sn-glycero-3-phosphoethanolamine + CO2. Its pathway is phospholipid metabolism; phosphatidylethanolamine biosynthesis; phosphatidylethanolamine from CDP-diacylglycerol: step 2/2. Functionally, catalyzes the formation of phosphatidylethanolamine (PtdEtn) from phosphatidylserine (PtdSer). The chain is Phosphatidylserine decarboxylase proenzyme from Verminephrobacter eiseniae (strain EF01-2).